Reading from the N-terminus, the 364-residue chain is Ferrochelatase (364 aa).

2 residues coordinate Fe cation: H211 and E292.

This sequence belongs to the ferrochelatase family.

The protein localises to the cytoplasm. The enzyme catalyses heme b + 2 H(+) = protoporphyrin IX + Fe(2+). It participates in porphyrin-containing compound metabolism; protoheme biosynthesis; protoheme from protoporphyrin-IX: step 1/1. Catalyzes the ferrous insertion into protoporphyrin IX. This is Ferrochelatase from Nitrosomonas europaea (strain ATCC 19718 / CIP 103999 / KCTC 2705 / NBRC 14298).